A 400-amino-acid polypeptide reads, in one-letter code: Methylamine dehydrogenase heavy chain (400 aa).

The N-terminal stretch at 1–27 (MTTFQPGRLAGQLAATALLAATCSAFA) is a signal peptide.

Belongs to the aromatic amine dehydrogenase heavy chain family. Tetramer of two light and two heavy chains.

It localises to the periplasm. It catalyses the reaction 2 oxidized [amicyanin] + methylamine + H2O = 2 reduced [amicyanin] + formaldehyde + NH4(+) + 2 H(+). Functionally, methylamine dehydrogenase carries out the oxidation of methylamine. Electrons are passed from methylamine dehydrogenase to amicyanin. In Methylobacillus flagellatus (strain ATCC 51484 / DSM 6875 / VKM B-1610 / KT), this protein is Methylamine dehydrogenase heavy chain (mauB).